The primary structure comprises 487 residues: Putative KilA-N domain-containing protein L37 (487 aa).

Residues 1 to 12 (MKVQKSSKKPLK) are compositionally biased toward basic residues. Positions 1–137 (MKVQKSSKKP…DINSDDDNNL (137 aa)) are disordered. Low complexity predominate over residues 22-34 (KSGSKSMKSSKSS). 2 stretches are compositionally biased toward acidic residues: residues 47–77 (DSEI…ESSD) and 111–136 (VLDD…DDNN). Positions 175-284 (EISKGIYGTF…HKVSKIVNDY (110 aa)) constitute a KilA-N domain. Residues 290-338 (FDKHEQLIKGKDDKIAELTRKIDKQTSLMKDQKSTIKEQDKKINELLSK) adopt a coiled-coil conformation.

This is Putative KilA-N domain-containing protein L37 from Acanthamoeba polyphaga mimivirus (APMV).